The primary structure comprises 312 residues: Olfactory receptor 6C76 (312 aa).

Topologically, residues 1–23 (MKNRTSVTDFILLGLTDNPQLQV) are extracellular. Asn3 carries N-linked (GlcNAc...) asparagine glycosylation. A helical membrane pass occupies residues 24–44 (VIFSFLFLTYVLSVTGNLTII). At 45-57 (SLTLLDSHLKTPM) the chain is on the cytoplasmic side. A helical transmembrane segment spans residues 58-80 (YFFLRNFSLEISFTSVCNPRFLI). At 81 to 94 (SILTGDKSISYNAC) the chain is on the extracellular side. The cysteines at positions 94 and 176 are disulfide-linked. The chain crosses the membrane as a helical span at residues 95–115 (AAQLFFFIFLGSTEFFLLASM). Topologically, residues 116-142 (SYDCYVAICKPLHYTTIMSDRICYQLI) are cytoplasmic. A helical membrane pass occupies residues 143-163 (ISSWLAGFLVIFPPLAMGLQL). Topologically, residues 164–195 (DFCDSNVIDHFTCDSAPLLQISCTDTSTLELM) are extracellular. A helical membrane pass occupies residues 196–216 (SFILALFTLISTLILVILSYT). The Cytoplasmic segment spans residues 217 to 238 (YIIRTILRIPSAQQRKKAFSTC). A helical transmembrane segment spans residues 239–259 (SSHVIVVSISYGSCIFMYVKT). At 260-267 (SAKEGVAL) the chain is on the extracellular side. Residues 268 to 288 (TKGVAILNTSVAPMLNPFIYT) form a helical membrane-spanning segment. Topologically, residues 289 to 312 (LRNQQVKQAFKDVLRKISHKKKKH) are cytoplasmic.

It belongs to the G-protein coupled receptor 1 family.

The protein resides in the cell membrane. Its function is as follows. Odorant receptor. The protein is Olfactory receptor 6C76 (OR6C76) of Homo sapiens (Human).